A 437-amino-acid chain; its full sequence is Nicotinate phosphoribosyltransferase (437 aa).

His-231 bears the Phosphohistidine; by autocatalysis mark.

This sequence belongs to the NAPRTase family. Transiently phosphorylated on a His residue during the reaction cycle. Phosphorylation strongly increases the affinity for substrates and increases the rate of nicotinate D-ribonucleotide production. Dephosphorylation regenerates the low-affinity form of the enzyme, leading to product release.

The enzyme catalyses nicotinate + 5-phospho-alpha-D-ribose 1-diphosphate + ATP + H2O = nicotinate beta-D-ribonucleotide + ADP + phosphate + diphosphate. It functions in the pathway cofactor biosynthesis; NAD(+) biosynthesis; nicotinate D-ribonucleotide from nicotinate: step 1/1. In terms of biological role, catalyzes the synthesis of beta-nicotinate D-ribonucleotide from nicotinate and 5-phospho-D-ribose 1-phosphate at the expense of ATP. This is Nicotinate phosphoribosyltransferase from Vibrio vulnificus (strain CMCP6).